The sequence spans 219 residues: Octanoyltransferase (219 aa).

The BPL/LPL catalytic domain occupies 37–219 (EHSPDQLWIL…DFNDVQVILQ (183 aa)). Substrate is bound by residues 76–83 (RGGQVTWH), 143–145 (SLG), and 156–158 (GLA). Cys174 acts as the Acyl-thioester intermediate in catalysis.

It belongs to the LipB family.

Its subcellular location is the cytoplasm. The enzyme catalyses octanoyl-[ACP] + L-lysyl-[protein] = N(6)-octanoyl-L-lysyl-[protein] + holo-[ACP] + H(+). It participates in protein modification; protein lipoylation via endogenous pathway; protein N(6)-(lipoyl)lysine from octanoyl-[acyl-carrier-protein]: step 1/2. In terms of biological role, catalyzes the transfer of endogenously produced octanoic acid from octanoyl-acyl-carrier-protein onto the lipoyl domains of lipoate-dependent enzymes. Lipoyl-ACP can also act as a substrate although octanoyl-ACP is likely to be the physiological substrate. The chain is Octanoyltransferase from Acinetobacter baylyi (strain ATCC 33305 / BD413 / ADP1).